We begin with the raw amino-acid sequence, 65 residues long: Photosystem II reaction center protein J (65 aa).

Residues 1–18 show a composition bias toward basic and acidic residues; sequence MSSKLKGPDGRLPDRLPD. The disordered stretch occupies residues 1 to 21; that stretch reads MSSKLKGPDGRLPDRLPDGRP. The chain crosses the membrane as a helical span at residues 36–56; that stretch reads LWLVATAGGIAVIFVLGIFFY.

It belongs to the PsbJ family. As to quaternary structure, PSII is composed of 1 copy each of membrane proteins PsbA, PsbB, PsbC, PsbD, PsbE, PsbF, PsbH, PsbI, PsbJ, PsbK, PsbL, PsbM, PsbT, PsbX, PsbY, Psb30/Ycf12, peripheral proteins PsbO, CyanoQ (PsbQ), PsbU, PsbV and a large number of cofactors. It forms dimeric complexes.

It is found in the cellular thylakoid membrane. One of the components of the core complex of photosystem II (PSII). PSII is a light-driven water:plastoquinone oxidoreductase that uses light energy to abstract electrons from H(2)O, generating O(2) and a proton gradient subsequently used for ATP formation. It consists of a core antenna complex that captures photons, and an electron transfer chain that converts photonic excitation into a charge separation. This is Photosystem II reaction center protein J from Prochlorococcus marinus (strain SARG / CCMP1375 / SS120).